Reading from the N-terminus, the 217-residue chain is Small ribosomal subunit protein uS3 (217 aa).

Residues 38 to 106 (IRKFIDNELK…KVHINVIEIK (69 aa)) enclose the KH type-2 domain.

This sequence belongs to the universal ribosomal protein uS3 family. In terms of assembly, part of the 30S ribosomal subunit. Forms a tight complex with proteins S10 and S14.

Binds the lower part of the 30S subunit head. Binds mRNA in the 70S ribosome, positioning it for translation. In Staphylococcus epidermidis (strain ATCC 35984 / DSM 28319 / BCRC 17069 / CCUG 31568 / BM 3577 / RP62A), this protein is Small ribosomal subunit protein uS3.